Consider the following 647-residue polypeptide: LIM domain kinase 1 (647 aa).

LIM zinc-binding domains follow at residues 25-75 (CASC…CKKD) and 84-137 (CHGC…CGQC). Residues 165–258 (LVSIPASAHG…LLQLTLEHDP (94 aa)) enclose the PDZ domain. Phosphoserine is present on serine 210. Threonine 229 carries the post-translational modification Phosphothreonine. A disordered region spans residues 256 to 316 (HDPHDSLGHG…SLVSPASQRK (61 aa)). The segment covering 278–289 (HTPSGQAGSSAR) has biased composition (polar residues). Serine 298, serine 302, serine 307, and serine 310 each carry phosphoserine. Residue serine 323 is modified to Phosphoserine; by MAPKAPK2. Position 337 is a phosphoserine (serine 337). A Protein kinase domain is found at 339–604 (LIHGEVLGKG…PSFVKLEQWL (266 aa)). Residues 345 to 353 (LGKGCFGQA) and lysine 368 contribute to the ATP site. Aspartate 460 is a catalytic residue. Threonine 508 bears the Phosphothreonine; by ROCK1 and PAK1 mark.

This sequence belongs to the protein kinase superfamily. TKL Ser/Thr protein kinase family. In terms of assembly, interacts (via LIM domain) with the cytoplasmic domain of NRG1. Interacts with NISCH. Interacts with RLIM and RNF6. Self-associates to form homodimers. Interacts with HSP90AA1; this interaction promotes LIMK1 dimerization and subsequent transphosphorylation. Interacts with CDKN1C. Interacts with SSH1. Interacts with ROCK1. Interacts (via LIM zinc-binding domains) with FAM89B/LRAP25 (via LRR repeat). Forms a tripartite complex with CDC42BPA, CDC42BPB and FAM89B/LRAP25. Autophosphorylated. Phosphorylated on Thr-508 by ROCK1 and PAK1, resulting in activation. Phosphorylated by PAK4 which increases the ability of LIMK1 to phosphorylate cofilin. Phosphorylated at Ser-323 by MAPKAPK2 during activation of VEGFA-induced signaling, which results in activation of LIMK1 and promotion of actin reorganization, cell migration, and tubule formation of endothelial cells. Dephosphorylated and inactivated by SSH1. Phosphorylated by CDC42BP. In terms of processing, ubiquitinated. 'Lys-48'-linked polyubiquitination by RNF6 leads to proteasomal degradation through the 26S proteasome, modulating LIMK1 levels in the growth cone and its effect on axonal outgrowth. Also polyubiquitinated by RLIM.

It is found in the cytoplasm. It localises to the nucleus. The protein resides in the cytoskeleton. Its subcellular location is the cell projection. The protein localises to the lamellipodium. It catalyses the reaction L-seryl-[protein] + ATP = O-phospho-L-seryl-[protein] + ADP + H(+). The catalysed reaction is L-threonyl-[protein] + ATP = O-phospho-L-threonyl-[protein] + ADP + H(+). Serine/threonine-protein kinase that plays an essential role in the regulation of actin filament dynamics. Acts downstream of several Rho family GTPase signal transduction pathways. Activated by upstream kinases including ROCK1, PAK1 and PAK4, which phosphorylate LIMK1 on a threonine residue located in its activation loop. LIMK1 subsequently phosphorylates and inactivates the actin binding/depolymerizing factors cofilin-1/CFL1, cofilin-2/CFL2 and destrin/DSTN, thereby preventing the cleavage of filamentous actin (F-actin), and stabilizing the actin cytoskeleton. In this way LIMK1 regulates several actin-dependent biological processes including cell motility, cell cycle progression, and differentiation. Phosphorylates TPPP on serine residues, thereby promoting microtubule disassembly. Stimulates axonal outgrowth and may be involved in brain development. This chain is LIM domain kinase 1 (Limk1), found in Rattus norvegicus (Rat).